We begin with the raw amino-acid sequence, 60 residues long: Metallothionein A (60 aa).

Residues 1 to 28 (MDPCQCSKSGTCNCGGSCTCTNCSCKSC) are beta. A divalent metal cation contacts are provided by Cys-4, Cys-6, Cys-12, Cys-14, Cys-18, Cys-20, Cys-23, Cys-25, Cys-28, Cys-32, Cys-33, Cys-35, Cys-36, Cys-40, Cys-43, Cys-47, Cys-49, Cys-54, Cys-58, and Cys-59. Residues 29–60 (KKSCCPCCPSGCTKCASGCVCKGKTCDTSCCQ) form an alpha region.

This sequence belongs to the metallothionein superfamily. Type 1 family.

Metallothioneins have a high content of cysteine residues that bind various heavy metals. The protein is Metallothionein A (mta) of Trematomus bernacchii (Emerald rockcod).